The primary structure comprises 1449 residues: DNA polymerase III PolC-type (1449 aa).

The interval 194-231 (AQEKPVKKESSDNKHKSNGGNKGGYEKKSYKDEPKNEN) is disordered. Basic and acidic residues-rich tracts occupy residues 197-208 (KPVKKESSDNKH) and 217-229 (GYEKKSYKDEPKN). One can recognise an Exonuclease domain in the interval 435–590 (YVVFDIETTG…DDAKATAEIL (156 aa)).

The protein belongs to the DNA polymerase type-C family. PolC subfamily.

It is found in the cytoplasm. It catalyses the reaction DNA(n) + a 2'-deoxyribonucleoside 5'-triphosphate = DNA(n+1) + diphosphate. Its function is as follows. Required for replicative DNA synthesis. This DNA polymerase also exhibits 3' to 5' exonuclease activity. The sequence is that of DNA polymerase III PolC-type from Clostridium perfringens (strain 13 / Type A).